Reading from the N-terminus, the 227-residue chain is N-(5'-phosphoribosyl)anthranilate isomerase (227 aa).

It belongs to the TrpF family.

The catalysed reaction is N-(5-phospho-beta-D-ribosyl)anthranilate = 1-(2-carboxyphenylamino)-1-deoxy-D-ribulose 5-phosphate. Its pathway is amino-acid biosynthesis; L-tryptophan biosynthesis; L-tryptophan from chorismate: step 3/5. The polypeptide is N-(5'-phosphoribosyl)anthranilate isomerase (Herminiimonas arsenicoxydans).